Here is a 1670-residue protein sequence, read N- to C-terminus: Protein TASOR (1670 aa).

Residues 1 to 110 (MATAVETEAC…QIPRKSREKK (110 aa)) form a disordered region. An N-acetylalanine modification is found at A2. The segment covering 67–78 (QSLSHEQPQDSS) has biased composition (polar residues). S344 bears the Phosphoserine mark. A Glycyl lysine isopeptide (Lys-Gly) (interchain with G-Cter in SUMO2) cross-link involves residue K586. Residues S633, S636, S673, and S800 each carry the phosphoserine modification. Glycyl lysine isopeptide (Lys-Gly) (interchain with G-Cter in SUMO2) cross-links involve residues K823 and K832. S843 is modified (phosphoserine). K872 participates in a covalent cross-link: Glycyl lysine isopeptide (Lys-Gly) (interchain with G-Cter in SUMO2). The interval 921–947 (TGGNARSPEDQLGKHGEKQTPGMKSPE) is disordered. 3 positions are modified to phosphoserine: S927, S971, and S979. Over residues 927–938 (SPEDQLGKHGEK) the composition is skewed to basic and acidic residues. Phosphothreonine occurs at positions 982 and 1049. Phosphoserine is present on S1103. A compositionally biased stretch (basic and acidic residues) spans 1532–1545 (ETKGSRGTDQKKNT). Disordered regions lie at residues 1532 to 1558 (ETKGSRGTDQKKNTQIELQSSPDVQNS) and 1638 to 1670 (FLSAYTESLDRDKSPPPLSWGKSDSSRPYSQEK). Polar residues-rich tracts occupy residues 1546–1558 (QIELQSSPDVQNS) and 1659–1670 (KSDSSRPYSQEK). S1552 is subject to Phosphoserine.

It belongs to the TASOR family. Component of the HUSH complex; at least composed of TASOR, PPHLN1 and MPHOSPH8. Interacts with MORC2; the interaction associateS MORC2 with the HUSH complex which recruits MORC2 to heterochromatic loci. Interacts with ZNF638; leading to recruitment of the HUSH complex to unintegrated retroviral DNA. Interacts with INPP5A, EML1, SV1L, GPSM2, ITGB3BP, CNTN1, ETFA, PSMD8, S100A10, MPHOSPH8, TMEM100, ALB, PARPBP, HCFC2, NCBP1 and SETDB1.

It localises to the nucleus. It is found in the chromosome. In terms of biological role, component of the HUSH complex, a multiprotein complex that mediates epigenetic repression. The HUSH complex is recruited to genomic loci rich in H3K9me3 and is required to maintain transcriptional silencing by promoting recruitment of SETDB1, a histone methyltransferase that mediates further deposition of H3K9me3, as well as MORC2. Also represses L1 retrotransposons in collaboration with MORC2 and, probably, SETDB1, the silencing is dependent of repressive epigenetic modifications, such as H3K9me3 mark. Silencing events often occur within introns of transcriptionally active genes, and lead to the down-regulation of host gene expression. The HUSH complex is also involved in the silencing of unintegrated retroviral DNA by being recruited by ZNF638: some part of the retroviral DNA formed immediately after infection remains unintegrated in the host genome and is transcriptionally repressed. Plays a crucial role in early embryonic development. Involved in the organization of spindle poles and spindle apparatus assembly during zygotic division. Plays an important role in maintaining epiblast fitness or potency. The protein is Protein TASOR of Homo sapiens (Human).